Reading from the N-terminus, the 394-residue chain is Zinc finger and SCAN domain-containing protein 9 (394 aa).

Lys-26 participates in a covalent cross-link: Glycyl lysine isopeptide (Lys-Gly) (interchain with G-Cter in SUMO2). The SCAN box domain occupies 52–134 (RRHFRQLCYQ…ILLEDLEREL (83 aa)). Glycyl lysine isopeptide (Lys-Gly) (interchain with G-Cter in SUMO2) cross-links involve residues Lys-215 and Lys-238. 5 consecutive C2H2-type zinc fingers follow at residues 254 to 276 (HKCDECGKSFTQSSGLIRHQRIH), 282 to 304 (YECNECGKAFSRSSGLFNHRGIH), 310 to 332 (YHCKECGKVFSQSAGLIQHQRIH), 338 to 360 (YQCSQCSKSYSRRSFLIEHQRSH), and 366 to 388 (HQCIECGKSFNRHCNLIRHQKIH).

This sequence belongs to the krueppel C2H2-type zinc-finger protein family.

It localises to the nucleus. Functionally, may be involved in transcriptional regulation. This is Zinc finger and SCAN domain-containing protein 9 (ZSCAN9) from Homo sapiens (Human).